The sequence spans 581 residues: Putative ABC transporter ATP-binding protein MM_1996 (581 aa).

An ABC transporter 1 domain is found at 10 to 250; the sequence is IEIRDLWYTY…LEVFHRLGLR (241 aa). 44-51 serves as a coordination point for ATP; sequence GPTGCGKS. The tract at residues 287–309 is disordered; the sequence is GDYPASPGRKEKTSSPGWSSENN. Residues 300 to 309 show a composition bias toward polar residues; sequence SSPGWSSENN. An ABC transporter 2 domain is found at 313 to 541; it reads VSVRDLWSGY…IDILRKASLT (229 aa). 346–353 contacts ATP; it reads GTNGSGKS.

Belongs to the ABC transporter superfamily.

The protein resides in the cell membrane. In terms of biological role, probably part of an ABC transporter complex. Responsible for energy coupling to the transport system. This chain is Putative ABC transporter ATP-binding protein MM_1996, found in Methanosarcina mazei (strain ATCC BAA-159 / DSM 3647 / Goe1 / Go1 / JCM 11833 / OCM 88) (Methanosarcina frisia).